The primary structure comprises 496 residues: Apolipoprotein N-acyltransferase (496 aa).

The next 6 membrane-spanning stretches (helical) occupy residues 6–26 (IICL…FFIP), 50–70 (FGYL…SIGV), 77–97 (FWWA…FFIS), 114–134 (LIFC…LTGL), 148–168 (ILIQ…VIYI), and 183–203 (LKIL…YGAV). In terms of domain architecture, CN hydrolase spans 220–464 (VQPSIPQTAK…QGLIPQKLTT (245 aa)). Residue Glu259 is the Proton acceptor of the active site. The active site involves Lys322. The Nucleophile role is filled by Cys372. A helical transmembrane segment spans residues 474-494 (FAMLLSIVFIILIHYLLSLIF).

The protein belongs to the CN hydrolase family. Apolipoprotein N-acyltransferase subfamily.

Its subcellular location is the cell inner membrane. The enzyme catalyses N-terminal S-1,2-diacyl-sn-glyceryl-L-cysteinyl-[lipoprotein] + a glycerophospholipid = N-acyl-S-1,2-diacyl-sn-glyceryl-L-cysteinyl-[lipoprotein] + a 2-acyl-sn-glycero-3-phospholipid + H(+). The protein operates within protein modification; lipoprotein biosynthesis (N-acyl transfer). In terms of biological role, catalyzes the phospholipid dependent N-acylation of the N-terminal cysteine of apolipoprotein, the last step in lipoprotein maturation. The chain is Apolipoprotein N-acyltransferase from Rickettsia prowazekii (strain Madrid E).